A 320-amino-acid chain; its full sequence is Cytochrome f (320 aa).

A signal peptide spans 1–35 (MQTRNAFSWIKKEITRSISVLLMIYIITRAPISNA). The heme site is built by Y36, C56, C59, and H60. Residues 286–305 (VQGLLLFLASIILAQIFLVL) traverse the membrane as a helical segment.

This sequence belongs to the cytochrome f family. In terms of assembly, the 4 large subunits of the cytochrome b6-f complex are cytochrome b6, subunit IV (17 kDa polypeptide, petD), cytochrome f and the Rieske protein, while the 4 small subunits are PetG, PetL, PetM and PetN. The complex functions as a dimer. It depends on heme as a cofactor.

Its subcellular location is the plastid. It is found in the chloroplast thylakoid membrane. Its function is as follows. Component of the cytochrome b6-f complex, which mediates electron transfer between photosystem II (PSII) and photosystem I (PSI), cyclic electron flow around PSI, and state transitions. This is Cytochrome f (petA) from Vicia faba (Broad bean).